We begin with the raw amino-acid sequence, 375 residues long: Chaperone protein DnaJ (375 aa).

In terms of domain architecture, J spans 5-70 (DYYELLGISR…EKRAAYDQYG (66 aa)). Residues 132–210 (GTTKDIKIHT…CHGDGRVNKA (79 aa)) form a CR-type zinc finger. Zn(2+)-binding residues include C145, C148, C162, C165, C184, C187, C198, and C201. CXXCXGXG motif repeat units follow at residues 145 to 152 (CDTCHGTG), 162 to 169 (CPHCHGAG), 184 to 191 (CHFCHGTG), and 198 to 205 (CKTCHGDG).

It belongs to the DnaJ family. As to quaternary structure, homodimer. Zn(2+) serves as cofactor.

The protein localises to the cytoplasm. In terms of biological role, participates actively in the response to hyperosmotic and heat shock by preventing the aggregation of stress-denatured proteins and by disaggregating proteins, also in an autonomous, DnaK-independent fashion. Unfolded proteins bind initially to DnaJ; upon interaction with the DnaJ-bound protein, DnaK hydrolyzes its bound ATP, resulting in the formation of a stable complex. GrpE releases ADP from DnaK; ATP binding to DnaK triggers the release of the substrate protein, thus completing the reaction cycle. Several rounds of ATP-dependent interactions between DnaJ, DnaK and GrpE are required for fully efficient folding. Also involved, together with DnaK and GrpE, in the DNA replication of plasmids through activation of initiation proteins. This is Chaperone protein DnaJ from Aggregatibacter actinomycetemcomitans (Actinobacillus actinomycetemcomitans).